The primary structure comprises 437 residues: Protein arginine methyltransferase NDUFAF7 homolog, mitochondrial (437 aa).

The interval 21–49 is disordered; it reads RPNLGATGTPKMEPPKEQPEASSKAESGH.

Belongs to the NDUFAF7 family.

The protein resides in the mitochondrion. The catalysed reaction is L-arginyl-[protein] + 2 S-adenosyl-L-methionine = N(omega),N(omega)'-dimethyl-L-arginyl-[protein] + 2 S-adenosyl-L-homocysteine + 2 H(+). Its function is as follows. Arginine methyltransferase involved in the assembly or stability of mitochondrial NADH:ubiquinone oxidoreductase complex (complex I). The protein is Protein arginine methyltransferase NDUFAF7 homolog, mitochondrial of Drosophila melanogaster (Fruit fly).